The chain runs to 455 residues: ATP-dependent protease ATPase subunit HslU (455 aa).

ATP is bound by residues Val-23, 65–70 (GVGKTE), Asp-266, Glu-333, and Arg-405.

This sequence belongs to the ClpX chaperone family. HslU subfamily. As to quaternary structure, a double ring-shaped homohexamer of HslV is capped on each side by a ring-shaped HslU homohexamer. The assembly of the HslU/HslV complex is dependent on binding of ATP.

It is found in the cytoplasm. Functionally, ATPase subunit of a proteasome-like degradation complex; this subunit has chaperone activity. The binding of ATP and its subsequent hydrolysis by HslU are essential for unfolding of protein substrates subsequently hydrolyzed by HslV. HslU recognizes the N-terminal part of its protein substrates and unfolds these before they are guided to HslV for hydrolysis. The polypeptide is ATP-dependent protease ATPase subunit HslU (Xanthomonas axonopodis pv. citri (strain 306)).